A 237-amino-acid polypeptide reads, in one-letter code: Ribosomal RNA small subunit methyltransferase G (237 aa).

S-adenosyl-L-methionine-binding positions include Gly-78, Phe-83, 129–130, and Arg-148; that span reads AE.

This sequence belongs to the methyltransferase superfamily. RNA methyltransferase RsmG family.

It is found in the cytoplasm. Specifically methylates the N7 position of a guanine in 16S rRNA. The sequence is that of Ribosomal RNA small subunit methyltransferase G from Streptococcus equi subsp. equi (strain 4047).